Reading from the N-terminus, the 422-residue chain is Light-independent protochlorophyllide reductase subunit N (422 aa).

Positions 26, 51, and 112 each coordinate [4Fe-4S] cluster.

It belongs to the BchN/ChlN family. In terms of assembly, protochlorophyllide reductase is composed of three subunits; BchL, BchN and BchB. Forms a heterotetramer of two BchB and two BchN subunits. [4Fe-4S] cluster serves as cofactor.

It catalyses the reaction chlorophyllide a + oxidized 2[4Fe-4S]-[ferredoxin] + 2 ADP + 2 phosphate = protochlorophyllide a + reduced 2[4Fe-4S]-[ferredoxin] + 2 ATP + 2 H2O. It participates in porphyrin-containing compound metabolism; bacteriochlorophyll biosynthesis (light-independent). In terms of biological role, component of the dark-operative protochlorophyllide reductase (DPOR) that uses Mg-ATP and reduced ferredoxin to reduce ring D of protochlorophyllide (Pchlide) to form chlorophyllide a (Chlide). This reaction is light-independent. The NB-protein (BchN-BchB) is the catalytic component of the complex. This Acidiphilium rubrum protein is Light-independent protochlorophyllide reductase subunit N.